The following is a 374-amino-acid chain: Proteinase-activated receptor 3 (374 aa).

Residues 1–21 (MKALIFAAAGLLLLLPTFCQS) form the signal peptide. Residues 22–38 (GMENDTNNLAKPTLPIK) constitute a propeptide, removed for receptor activation. N25 and N82 each carry an N-linked (GlcNAc...) asparagine glycan. At 39–94 (TFRGAPPNSFEEFPFSALEGWTGATITVKIKCPEESASHLHVKNATMGYLTSSLST) the chain is on the extracellular side. The helical transmembrane segment at 95–120 (KLIPAIYLLVFVVGVPANAVTLWMLF) threads the bilayer. Residues 121 to 128 (FRTRSICT) lie on the Cytoplasmic side of the membrane. A helical membrane pass occupies residues 129-148 (TVFYTNLAIADFLFCVTLPF). The Extracellular portion of the chain corresponds to 149–167 (KIAYHLNGNNWVFGEVLCR). A disulfide bridge connects residues C166 and C245. Residues 168–189 (ATTVIFYGNMYCSILLLACISI) traverse the membrane as a helical segment. Topologically, residues 190–206 (NRYLAIVHPFTYRGLPK) are cytoplasmic. Residues 207-230 (HTYALVTCGLVWATVFLYMLPFFI) form a helical membrane-spanning segment. The Extracellular portion of the chain corresponds to 231–260 (LKQEYYLVQPDITTCHDVHNTCESSSPFQL). Residues 261 to 280 (YYFISLAFFGFLIPFVLIIY) form a helical membrane-spanning segment. Over 281 to 297 (CYAAIIRTLNAYDHRWL) the chain is Cytoplasmic. Residues 298 to 322 (WYVKASLLILVIFTICFAPSNIILI) form a helical membrane-spanning segment. The Extracellular portion of the chain corresponds to 323-336 (IHHANYYYNNTDGL). An N-linked (GlcNAc...) asparagine glycan is attached at N331. Residues 337-361 (YFIYLIALCLGSLNSCLDPFLYFLM) traverse the membrane as a helical segment. The Cytoplasmic segment spans residues 362-374 (SKTRNHSTAYLTK).

The protein belongs to the G-protein coupled receptor 1 family. Interacts with INSC/inscuteable and probably GPSM2. Post-translationally, a proteolytic cleavage generates a new N-terminus that functions as a tethered ligand. As to expression, highest expression in the megakaryocytes of the bone marrow, lower in mature megakaryocytes, in platelets and in a variety of other tissues such as heart and gut.

The protein resides in the cell membrane. Receptor for activated thrombin coupled to G proteins that stimulate phosphoinositide hydrolysis. The protein is Proteinase-activated receptor 3 (F2RL2) of Homo sapiens (Human).